Here is a 319-residue protein sequence, read N- to C-terminus: tRNA-modifying protein YgfZ (319 aa).

Folate is bound by residues Trp27 and Trp189.

The protein belongs to the tRNA-modifying YgfZ family.

Its subcellular location is the cytoplasm. Functionally, folate-binding protein involved in regulating the level of ATP-DnaA and in the modification of some tRNAs. It is probably a key factor in regulatory networks that act via tRNA modification, such as initiation of chromosomal replication. This chain is tRNA-modifying protein YgfZ, found in Buchnera aphidicola subsp. Schizaphis graminum (strain Sg).